A 303-amino-acid chain; its full sequence is Polyisoprenyl-teichoic acid--peptidoglycan teichoic acid transferase TagU (303 aa).

Topologically, residues 1-4 (MKKK) are cytoplasmic. The helical; Signal-anchor for type II membrane protein transmembrane segment at 5 to 25 (ILFWVLGILGVLIIGGGIYAY) threads the bilayer. Over 26–303 (NVYSSVSNTL…KLRSHLEVTK (278 aa)) the chain is Extracellular.

The protein belongs to the LytR/CpsA/Psr (LCP) family.

Its subcellular location is the cell membrane. Its pathway is cell wall biogenesis. May catalyze the final step in cell wall teichoic acid biosynthesis, the transfer of the anionic cell wall polymers (APs) from their lipid-linked precursor to the cell wall peptidoglycan (PG). The chain is Polyisoprenyl-teichoic acid--peptidoglycan teichoic acid transferase TagU from Bacillus cereus (strain AH820).